Reading from the N-terminus, the 350-residue chain is Histidinol-phosphate aminotransferase (350 aa).

An N6-(pyridoxal phosphate)lysine modification is found at lysine 210.

Belongs to the class-II pyridoxal-phosphate-dependent aminotransferase family. Histidinol-phosphate aminotransferase subfamily. As to quaternary structure, homodimer. Pyridoxal 5'-phosphate is required as a cofactor.

The enzyme catalyses L-histidinol phosphate + 2-oxoglutarate = 3-(imidazol-4-yl)-2-oxopropyl phosphate + L-glutamate. It participates in amino-acid biosynthesis; L-histidine biosynthesis; L-histidine from 5-phospho-alpha-D-ribose 1-diphosphate: step 7/9. The chain is Histidinol-phosphate aminotransferase from Pseudomonas syringae pv. syringae (strain B728a).